Here is a 1055-residue protein sequence, read N- to C-terminus: Leukotoxin (1055 aa).

Residues 11 to 49 (QQAAQFANSVADRAKENIDAAKEQLQKALDKLGKTGKKL) adopt a coiled-coil conformation. Cholesterol recognition/amino acid consensus (CRAC) region stretches follow at residues 334-340 (LEEYSKR) and 502-506 (VDYLK). 7 Hemolysin-type calcium-binding repeats span residues 721–738 (IGST…NDVF), 739–756 (HGHD…DDRL), 757–774 (YGDN…NDKL), 775–792 (YGGA…NNYL), 793–810 (DGGE…SDIL), 811–828 (RGGS…DDLL), and 829–846 (DGGE…NDIY). The segment at 795–815 (GEGDDHLEGGNGSDILRGGSG) is disordered. The disordered stretch occupies residues 990–1009 (KGKSSSLMSSSRSSSMLTQK). Residues 993–1006 (SSSLMSSSRSSSML) are compositionally biased toward low complexity.

Belongs to the RTX prokaryotic toxin (TC 1.C.11) family. As to quaternary structure, interacts specifically with the superoxide dismutase [Cu-Zn]. This interaction may protect LtxA from reactive oxygen species and reactive nitrogen species produced by host inflammatory cells during disease. Interacts with the human leukocyte adhesion glycoprotein LFA-1 (ITGAL-ITGB2). Acylated at Lys-562 and Lys-687 by LtxC. This modification is required for full activity. Isolated methyl esters contain palmitoyl and palmitolyl fatty acyl groups with smaller quantities of myristic and stearic fatty acids.

Its subcellular location is the cell outer membrane. The protein resides in the secreted. Virulence factor that plays an important role in immune evasion. Lyses human lymphocytes and monocytes. Binds to the LFA-1 integrin on the surface of the host cell and to cholesterol-containing membranes, which probably results in large LtxA-LFA-1 clusters in lipid rafts. Also shows beta-hemolytic activity on certain types of growth media. The protein is Leukotoxin of Aggregatibacter actinomycetemcomitans (Actinobacillus actinomycetemcomitans).